The sequence spans 365 residues: PHD finger protein 6 (365 aa).

Residue Ser2 is modified to N-acetylserine. Short sequence motifs (nuclear localization signal) lie at residues 13–16 and 129–133; these read RQRK and RKHKK. The C2HC pre-PHD-type 1 zinc-finger motif lies at 14–52; the sequence is QRKCGFCKSNRDKECGQLLISENQKVAAHHKCMLFSSAL. The segment at 14-132 is extended PHD1 domain (ePHD1); it reads QRKCGFCKSN…IYMVYCRKHK (119 aa). The segment at 80-132 adopts a PHD-type 1 zinc-finger fold; the sequence is LMCSLCHCPGATIGCDVKTCHRTYHYHCALHDKAQIREKPSQGIYMVYCRKHK. Residues Ser138, Ser145, and Ser155 each carry the phosphoserine modification. Residues 139 to 211 are disordered; sequence EADLEESFNE…RSSPSDTRPK (73 aa). A Nucleolar localization signal motif is present at residues 157 to 169; it reads KSKKKSRKGRPRK. Basic residues predominate over residues 157 to 171; the sequence is KSKKKSRKGRPRKTN. A Glycyl lysine isopeptide (Lys-Gly) (interchain with G-Cter in SUMO2) cross-link involves residue Lys173. Phosphoserine is present on residues Ser183 and Ser199. A C2HC pre-PHD-type 2 zinc finger spans residues 209 to 249; it reads RPKCGFCHVGEEENQARGKLHIFNAKKAAAHYKCMLFSSGT. An extended PHD2 domain (ePHD2) region spans residues 209–330; sequence RPKCGFCHVG…IYKLYCKNHS (122 aa). Residue Lys227 forms a Glycyl lysine isopeptide (Lys-Gly) (interchain with G-Cter in SUMO2) linkage. The PHD-type 2 zinc finger occupies 278–330; that stretch reads MKCTLCSQPGATIGCEIKACVKTYHYHCGVQDKAKYIENMSRGIYKLYCKNHS. The segment at 330-365 is disordered; it reads SGNDERDEEDEERESKSRGKVEIDQQQLTQQQLNGN. Basic and acidic residues predominate over residues 342 to 352; sequence RESKSRGKVEI. Residues 354-365 are compositionally biased toward low complexity; that stretch reads QQQLTQQQLNGN. Thr358 carries the phosphothreonine modification.

In terms of assembly, interacts with UBTF. Interacts with the NuRD complex component RBBP4 (via the nucleolar localization motif), the interaction mediates transcriptional repression activity.

Its subcellular location is the nucleus. The protein localises to the nucleolus. It is found in the chromosome. The protein resides in the centromere. It localises to the kinetochore. Its function is as follows. Transcriptional regulator that associates with ribosomal RNA promoters and suppresses ribosomal RNA (rRNA) transcription. The sequence is that of PHD finger protein 6 (PHF6) from Bos taurus (Bovine).